The sequence spans 138 residues: UPF0355 protein SSP2326 (138 aa).

Residues 115-138 (NVAFETNQTKSNSHYSEETNGPKS) are disordered. Residues 118–138 (FETNQTKSNSHYSEETNGPKS) are compositionally biased toward polar residues.

It belongs to the UPF0355 family.

In Staphylococcus saprophyticus subsp. saprophyticus (strain ATCC 15305 / DSM 20229 / NCIMB 8711 / NCTC 7292 / S-41), this protein is UPF0355 protein SSP2326.